The primary structure comprises 188 residues: Pro-FMRFamide-related neuropeptide VF (188 aa).

An N-terminal signal peptide occupies residues 1 to 26 (MEIISLKRFILLTVATSSFLTSNTFC). Residues 27-57 (TDEFMMPHFHSKEGDGKYSQLRGIPKGEKER) constitute a propeptide that is removed on maturation. The residue at position 94 (F94) is a Phenylalanine amide. A propeptide spanning residues 97–106 (TIDEKRSPAA) is cleaved from the precursor. Disordered regions lie at residues 116–144 (SHFP…QKPL) and 163–188 (IQSP…KPEK). Residue F125 is modified to Phenylalanine amide. Positions 128–188 (TTARSPKTPA…TDDAERKPEK (61 aa)) are excised as a propeptide.

Belongs to the FARP (FMRFamide related peptide) family.

The protein localises to the secreted. Its function is as follows. Efficiently inhibits forskolin-induced production of cAMP. Acts as a potent negative regulator of gonadotropin synthesis and secretion. Induces secretion of prolactin. Efficiently inhibits forskolin-induced production of cAMP. Blocks morphine-induced analgesia. The sequence is that of Pro-FMRFamide-related neuropeptide VF (Npvf) from Mus musculus (Mouse).